Reading from the N-terminus, the 74-residue chain is Mitochondrial import receptor subunit TOM6 homolog (74 aa).

Over residues 1 to 20 (MASSGVTVSAAGSASEASEV) the composition is skewed to low complexity. The segment at 1–21 (MASSGVTVSAAGSASEASEVP) is disordered. N-acetylalanine is present on Ala-2.

It belongs to the Tom6 family. In terms of assembly, forms part of the preprotein translocase complex of the outer mitochondrial membrane (TOM complex) which consists of at least 7 different proteins (TOMM5, TOMM6, TOMM7, TOMM20, TOMM22, TOMM40 and TOMM70).

Its subcellular location is the mitochondrion outer membrane. This Mus musculus (Mouse) protein is Mitochondrial import receptor subunit TOM6 homolog (Tomm6).